The following is a 672-amino-acid chain: Flap endonuclease 1 (672 aa).

The tract at residues 1 to 106 is N-domain; it reads MGIKGLTKFI…SELEKRGEKR (106 aa). Aspartate 34 is a Mg(2+) binding site. 2 residues coordinate DNA: arginine 47 and arginine 72. 5 residues coordinate Mg(2+): aspartate 88, glutamate 160, glutamate 162, aspartate 181, and aspartate 183. The I-domain stretch occupies residues 124–266; the sequence is EIKKQSGRTV…KTAYNLIKEY (143 aa). Glutamate 160 lines the DNA pocket. DNA-binding residues include glycine 244 and aspartate 246. Aspartate 246 contacts Mg(2+). The interaction with PCNA stretch occupies residues 349 to 357; sequence TQRRLDNFF. Positions 371 to 610 are disordered; it reads ETKKEQTLPA…EDSPNSYNNI (240 aa). Basic and acidic residues-rich tracts occupy residues 413–493, 502–526, and 535–548; these read MKEE…KKSL, DSDK…EKIN, and DHSR…KDNI. The span at 549–584 shows a compositional bias: low complexity; sequence SDINNNNNNNNSSSNNNNISNNHFNSVSSNSTFNSS. Residues 587–603 are compositionally biased toward basic and acidic residues; it reads LKSEDTLKSNSPLKEDS.

The protein belongs to the XPG/RAD2 endonuclease family. FEN1 subfamily. In terms of assembly, interacts with PCNA1 and PCNA2. Three molecules of FEN1 bind to one PCNA trimer with each molecule binding to one PCNA monomer. PCNA stimulates the nuclease activity without altering cleavage specificity. Requires Mg(2+) as cofactor. Post-translationally, phosphorylated. Phosphorylation upon DNA damage induces relocalization to the nuclear plasma.

The protein resides in the nucleus. It localises to the nucleolus. Its subcellular location is the nucleoplasm. The protein localises to the mitochondrion. Structure-specific nuclease with 5'-flap endonuclease and 5'-3' exonuclease activities involved in DNA replication and repair. During DNA replication, cleaves the 5'-overhanging flap structure that is generated by displacement synthesis when DNA polymerase encounters the 5'-end of a downstream Okazaki fragment. It enters the flap from the 5'-end and then tracks to cleave the flap base, leaving a nick for ligation. Also involved in the long patch base excision repair (LP-BER) pathway, by cleaving within the apurinic/apyrimidinic (AP) site-terminated flap. Acts as a genome stabilization factor that prevents flaps from equilibrating into structures that lead to duplications and deletions. Also possesses 5'-3' exonuclease activity on nicked or gapped double-stranded DNA, and exhibits RNase H activity. Also involved in replication and repair of rDNA and in repairing mitochondrial DNA. This chain is Flap endonuclease 1, found in Plasmodium falciparum (isolate 3D7).